A 63-amino-acid chain; its full sequence is Cecropin-1 (63 aa).

Residues 1–21 (MNFNKVFILVAIVIAIFAGQT) form the signal peptide. Positions 22–23 (EA) are excised as a propeptide. The residue at position 62 (arginine 62) is an Arginine amide.

The protein belongs to the cecropin family.

The protein localises to the secreted. Functionally, cecropins have lytic and antibacterial activity against several Gram-positive and Gram-negative bacteria. This chain is Cecropin-1 (CEC1), found in Ceratitis capitata (Mediterranean fruit fly).